The following is a 179-amino-acid chain: Phospholipase A2 (179 aa).

The signal sequence occupies residues 1–21; sequence MHALRSSVLALWLCLHVSVRA. Residues 22–39 constitute a propeptide that is removed on maturation; it reads WMTYRSANGLDEYEPEDR. 3 residues coordinate Ca(2+): Trp-47, Gly-49, and Gly-51. 5 disulfide bridges follow: Cys-48-Cys-70, Cys-69-Cys-109, Cys-76-Cys-102, Cys-100-Cys-133, and Cys-142-Cys-150. His-73 is an active-site residue. A Ca(2+)-binding site is contributed by Asp-74. The active site involves Asp-103. The N-linked (GlcNAc...) asparagine glycan is linked to Asn-112.

Ca(2+) is required as a cofactor. In terms of tissue distribution, expressed by the venom gland.

The protein resides in the secreted. It catalyses the reaction a 1,2-diacyl-sn-glycero-3-phosphocholine + H2O = a 1-acyl-sn-glycero-3-phosphocholine + a fatty acid + H(+). Functionally, PLA2 catalyzes the calcium-dependent hydrolysis of the 2-acyl groups in 3-sn-phosphoglycerides. The chain is Phospholipase A2 from Xylocopa appendiculata circumvolans (Japanese carpenter bee).